The sequence spans 309 residues: Olfactory receptor 4A47 (309 aa).

Residues 1 to 23 lie on the Extracellular side of the membrane; that stretch reads MEPRKNVTDFVLLGFTQNPKEQK. An N-linked (GlcNAc...) asparagine glycan is attached at N6. Residues 24–47 form a helical membrane-spanning segment; sequence VLFVMFLLFYILTMVGNLLIVVTV. At 48–55 the chain is on the cytoplasmic side; the sequence is TVSETLGS. The chain crosses the membrane as a helical span at residues 56–77; the sequence is PMYFFLAGLSFIDIIYSSSISP. The Extracellular segment spans residues 78-98; it reads RLISGLFFGNNSISFQSCMAQ. N-linked (GlcNAc...) asparagine glycosylation is present at N87. An intrachain disulfide couples C95 to C187. Residues 99–118 traverse the membrane as a helical segment; sequence LFIEHIFGGSEVFLLLVMAY. Over 119–137 the chain is Cytoplasmic; the sequence is DCYVAICKPLHYLVIMRQW. The chain crosses the membrane as a helical span at residues 138–156; the sequence is VCVVLLVVSWVGGFLHSVF. Residues 157-193 lie on the Extracellular side of the membrane; the sequence is QLSIIYGLPFCGPNVIDHFFCDMYPLLKLVCTDTHAI. The helical transmembrane segment at 194 to 217 threads the bilayer; that stretch reads GLLVVANGGLACTIVFLLLLISYG. Topologically, residues 218-233 are cytoplasmic; the sequence is VILHSLKNLSQKGRQK. A helical transmembrane segment spans residues 234–256; sequence ALSTCSSHMTVVVFFFVPCIFMY. Topologically, residues 257-267 are extracellular; sequence ARPARTFPIDK. The chain crosses the membrane as a helical span at residues 268–287; that stretch reads SVSVFYTVITPMLNPLIYTL. Residues 288-309 are Cytoplasmic-facing; the sequence is RNSEMTSAMKKLWRRDLISSST.

It belongs to the G-protein coupled receptor 1 family.

The protein localises to the cell membrane. Functionally, odorant receptor. The sequence is that of Olfactory receptor 4A47 (OR4A47) from Homo sapiens (Human).